The sequence spans 529 residues: Probable E3 ubiquitin-protein ligase MGRN1 (529 aa).

The segment at 275–314 (ECVVCLSDLRDTLILPCRHLCLCNACADTLRYQANNCPIC) adopts an RING-type zinc-finger fold. 2 disordered regions span residues 341-362 (SPVLSQSSDHTEHSNADNIPPG) and 396-529 (EMGD…VEEC). Composition is skewed to polar residues over residues 449-463 (AQPQSVLPCSLSPSE) and 477-487 (NSGSESRSLGV). A compositionally biased stretch (low complexity) spans 501-511 (SSLSQSESDPS). The span at 520–529 (ESWSTAVEEC) shows a compositional bias: polar residues.

Post-translationally, autoubiquitinated in vitro.

The enzyme catalyses S-ubiquitinyl-[E2 ubiquitin-conjugating enzyme]-L-cysteine + [acceptor protein]-L-lysine = [E2 ubiquitin-conjugating enzyme]-L-cysteine + N(6)-ubiquitinyl-[acceptor protein]-L-lysine.. It participates in protein modification; protein ubiquitination. Its function is as follows. E3 ubiquitin-protein ligase. Also acts as a negative regulator of hedgehog signaling. In Danio rerio (Zebrafish), this protein is Probable E3 ubiquitin-protein ligase MGRN1 (mgrn1).